The chain runs to 118 residues: Thioredoxin H-type (118 aa).

In terms of domain architecture, Thioredoxin spans 2-114 (AAEEGQVIGC…LQQTIAKHMA (113 aa)). Active-site nucleophile residues include Cys40 and Cys43. Residues Cys40 and Cys43 are joined by a disulfide bond.

It belongs to the thioredoxin family. Plant H-type subfamily.

It is found in the cytoplasm. Its function is as follows. Participates in various redox reactions through the reversible oxidation of the active center dithiol to a disulfide. The H form is known to activate a number of cytosolic enzymes. In Ricinus communis (Castor bean), this protein is Thioredoxin H-type.